The sequence spans 279 residues: Large ribosomal subunit protein uL2 (279 aa).

Positions 223-279 are disordered; the sequence is VAMNPVDHPMGGGEGRSSGGHPRSRKGLYAKGGKTRSANKYSKNMIVKKRVNKRLSK. The segment covering 268–279 has biased composition (basic residues); sequence IVKKRVNKRLSK.

The protein belongs to the universal ribosomal protein uL2 family. In terms of assembly, part of the 50S ribosomal subunit. Forms a bridge to the 30S subunit in the 70S ribosome.

In terms of biological role, one of the primary rRNA binding proteins. Required for association of the 30S and 50S subunits to form the 70S ribosome, for tRNA binding and peptide bond formation. It has been suggested to have peptidyltransferase activity; this is somewhat controversial. Makes several contacts with the 16S rRNA in the 70S ribosome. The protein is Large ribosomal subunit protein uL2 of Cytophaga hutchinsonii (strain ATCC 33406 / DSM 1761 / CIP 103989 / NBRC 15051 / NCIMB 9469 / D465).